The chain runs to 272 residues: Undecaprenyl-diphosphatase (272 aa).

8 helical membrane-spanning segments follow: residues 1–21 (MSTL…FLPI), 39–59 (QGLA…MMYF), 91–111 (WWIL…KDFI), 117–137 (SALV…FADI), 151–171 (LGLK…IPGT), 196–216 (FLLS…KLIL), 228–248 (LGSL…LILL), and 251–271 (LGMM…LWFI).

The protein belongs to the UppP family.

It is found in the cell inner membrane. The catalysed reaction is di-trans,octa-cis-undecaprenyl diphosphate + H2O = di-trans,octa-cis-undecaprenyl phosphate + phosphate + H(+). Functionally, catalyzes the dephosphorylation of undecaprenyl diphosphate (UPP). Confers resistance to bacitracin. This Colwellia psychrerythraea (strain 34H / ATCC BAA-681) (Vibrio psychroerythus) protein is Undecaprenyl-diphosphatase.